The following is an 895-amino-acid chain: WD repeat-containing protein 36 (895 aa).

WD repeat units lie at residues 30–63, 72–101, 110–143, 152–186, 193–230, 237–272, 277–320, and 327–361; these read VVRFSALKRRFYVTTCVGKSFHTYDVQKLSLVAV, CCMAADGRLVFAAYGNVFSAFARNKEIVHT, HFLQPFGDHIISVDTDGILIIWHIYSEEEYLQLT, SAILHPSTYLNKILLGSEQGSLQLWNVKSNKLLYT, GVTALQQAPAVDVVAIGLMSGQVIIHNIKFNETLMKFR, TSISFRTDGHPVMAAGSPCGHIGLWDLEDKKLINQM, STAI…RFRM, and TNIRYYGQNGQQILSASQDGTLQSFSTVHEKFNKS. Phosphoserine is present on residues Ser382 and Ser399. 6 WD repeats span residues 389 to 428, 441 to 475, 486 to 522, 527 to 562, 564 to 605, and 607 to 645; these read TKFAAEEARESDWDGIIACHQGKLSCSTWNYQKSTIGAYF, ATAVDITSCGNFAVIGLSSGTVDVYNMQSGIHRGS, VRGVAVDGLNQLTVTTGSEGLLKFWNFKNKILIHSVS, PNIMLLHRDSGILGLALDDFSISVLDIETRKIVREF, GHQG…DCFL, and DSAPLNVSMSPTGDFLATSHVDHLGIYLWSNISLYSVVS.

In terms of assembly, part of the small subunit (SSU) processome, composed of more than 70 proteins and the RNA chaperone small nucleolar RNA (snoRNA) U3. Expressed in heart, placenta, liver, skeletal muscle, kidney and pancreas. In ocular tissues, strong expression in iris, sclera, ciliary muscle, ciliary body, retina and optic nerve.

The protein resides in the nucleus. It localises to the nucleolus. Functionally, part of the small subunit (SSU) processome, first precursor of the small eukaryotic ribosomal subunit. During the assembly of the SSU processome in the nucleolus, many ribosome biogenesis factors, an RNA chaperone and ribosomal proteins associate with the nascent pre-rRNA and work in concert to generate RNA folding, modifications, rearrangements and cleavage as well as targeted degradation of pre-ribosomal RNA by the RNA exosome. Involved in the nucleolar processing of SSU 18S rRNA. Involved in T-cell activation and highly coregulated with IL2. This is WD repeat-containing protein 36 from Homo sapiens (Human).